The primary structure comprises 215 residues: Large ribosomal subunit protein bL25 (215 aa).

Residues 190–215 (VLTDAEEETDETPEEPEAIRQKGDEE) form a disordered region. Positions 193 to 205 (DAEEETDETPEEP) are enriched in acidic residues. Positions 206–215 (EAIRQKGDEE) are enriched in basic and acidic residues.

It belongs to the bacterial ribosomal protein bL25 family. CTC subfamily. In terms of assembly, part of the 50S ribosomal subunit; part of the 5S rRNA/L5/L18/L25 subcomplex. Contacts the 5S rRNA. Binds to the 5S rRNA independently of L5 and L18.

In terms of biological role, this is one of the proteins that binds to the 5S RNA in the ribosome where it forms part of the central protuberance. The chain is Large ribosomal subunit protein bL25 from Maricaulis maris (strain MCS10) (Caulobacter maris).